A 653-amino-acid polypeptide reads, in one-letter code: 4-alpha-glucanotransferase (653 aa).

The Nucleophile role is filled by E123. The active-site Proton donor is D214.

Belongs to the glycosyl hydrolase 57 family.

It carries out the reaction Transfers a segment of a (1-&gt;4)-alpha-D-glucan to a new position in an acceptor, which may be glucose or a (1-&gt;4)-alpha-D-glucan.. This is 4-alpha-glucanotransferase from Thermococcus kodakarensis (strain ATCC BAA-918 / JCM 12380 / KOD1) (Pyrococcus kodakaraensis (strain KOD1)).